A 282-amino-acid chain; its full sequence is Transcription factor MYB20 (282 aa).

HTH myb-type domains lie at 9–61 (KVGL…TNYL) and 62–116 (RPDL…KKKL). 2 consecutive DNA-binding regions (H-T-H motif) follow at residues 37–61 (WRAV…TNYL) and 89–112 (WSKI…NTHI).

As to expression, expressed in chalaza of mature seeds, cotyledons, rosette leaves, cauline leaves, veins of stems, mature siliques, sepals and styles. Expressed at low levels in roots.

It localises to the nucleus. Transcription factor that acts as a positive regulator of abscisic acid (ABA) signaling in response to salt stress. Acts as a negative regulator ABI1, ABI2 and PP2CA, which are protein phosphatases 2C acting as negative regulator of ABA signaling. Binds to the DNA specific sequence and core element 5'-ACGT-3' found in the promoters of ABI1 and PP2CA to negatively regulate their expression during ABA-dependent salt stress response. The sequence is that of Transcription factor MYB20 from Arabidopsis thaliana (Mouse-ear cress).